A 326-amino-acid polypeptide reads, in one-letter code: Putative HTH-type transcriptional regulatory protein MmarC7_1702 (326 aa).

The HTH cro/C1-type domain maps to 128–183 (LRETREKLKISVGELAEISRVSRKTIYKYEQNEANPSAEVAIKIEEYLDVPLIKGI). The H-T-H motif DNA-binding region spans 139–158 (VGELAEISRVSRKTIYKYEQ).

In Methanococcus maripaludis (strain C7 / ATCC BAA-1331), this protein is Putative HTH-type transcriptional regulatory protein MmarC7_1702.